A 464-amino-acid chain; its full sequence is JmjC domain-containing protein 1 (464 aa).

In terms of domain architecture, JmjC spans 182–349 (LYAKDMHLFR…QMYTALKEQY (168 aa)).

The chain is JmjC domain-containing protein 1 (jmj1) from Schizosaccharomyces pombe (strain 972 / ATCC 24843) (Fission yeast).